A 378-amino-acid chain; its full sequence is Glutamate 5-kinase (378 aa).

Lysine 14 is an ATP binding site. Serine 54, aspartate 141, and asparagine 153 together coordinate substrate. Serine 173–aspartate 174 is an ATP binding site. The PUA domain occupies alanine 279–aspartate 356.

Belongs to the glutamate 5-kinase family.

It localises to the cytoplasm. The enzyme catalyses L-glutamate + ATP = L-glutamyl 5-phosphate + ADP. It participates in amino-acid biosynthesis; L-proline biosynthesis; L-glutamate 5-semialdehyde from L-glutamate: step 1/2. Catalyzes the transfer of a phosphate group to glutamate to form L-glutamate 5-phosphate. In Brucella canis (strain ATCC 23365 / NCTC 10854 / RM-666), this protein is Glutamate 5-kinase.